We begin with the raw amino-acid sequence, 429 residues long: Histidine--tRNA ligase (429 aa).

It belongs to the class-II aminoacyl-tRNA synthetase family. In terms of assembly, homodimer.

The protein resides in the cytoplasm. The enzyme catalyses tRNA(His) + L-histidine + ATP = L-histidyl-tRNA(His) + AMP + diphosphate + H(+). The sequence is that of Histidine--tRNA ligase from Acidovorax ebreus (strain TPSY) (Diaphorobacter sp. (strain TPSY)).